A 639-amino-acid polypeptide reads, in one-letter code: MADYSTVPPPSSGSAGGGGGGGVNDAFKDALQRARQIAAKIGGDAGTSLNSNDYGYGGQKRPLEDGDQPDAKKVPPQNDSFGAQLPPMHQQQRSVMTEEYKVPDGMVGFIIGRGGEQISRIQQESGCKIQIAPDSGGLPERSCMLTGTPESVQSAKRLLDQIVEKGRPAPGFHHGDGPGNAVQEIMIPASKAGLVIGKGGETIKQLQERAGVKMVMIQDGPQNTGADKPLRITGDPYKVQQAKEMVLELIRDQGGFREVRNEYGSRIGGNEGIDVPIPRFAVGIVIGRNGEMIKKIQNDAGVRIQFKPDDGTTPDRIAQITGPPDRCQHAAEIITDLLRSVQAGNPGGPGPGGRGRGRGQGNWNMGPPGGLQEFNFIVPTGKTGLIIGKGGETIKSISQQSGARIELQRNPPPNADPNMKLFTIRGTPQQIDYARQLIEEKIGGPVNPLGPPVPHGPHGVPGPHGPPGPPGPGTPMGPYNPAPYNPGPPGPAPHGPPAPYAPQGWGNAYPHWQQQAPPDPAKAGTDPNSAAWAAYYAHYYQQQAQPPPAAPAGAPTTTQTNGQGDQQNPAPAGQVDYTKAWEEYYKKMGQAVPAPAGAPPGGQPDYSAAWAEYYRQQAAYYAQTSPQGMPQHPPAPQGQ.

Disordered regions lie at residues 1 to 27 and 40 to 88; these read MADY…NDAF and KIGG…LPPM. The residue at position 2 (Ala2) is an N-acetylalanine. Gly residues predominate over residues 14-23; that stretch reads SAGGGGGGGV. Ser48 and Ser51 each carry phosphoserine. Residues 61–73 are compositionally biased toward basic and acidic residues; that stretch reads RPLEDGDQPDAKK. KH domains follow at residues 95-159, 180-246, and 270-334; these read VMTE…KRLL, NAVQ…KEMV, and NEGI…AEII. Position 135 is a phosphoserine (Ser135). Thr148 is subject to Phosphothreonine. Residues Arg316, Arg354, Arg356, and Arg358 each carry the omega-N-methylarginine modification. The tract at residues 341–360 is disordered; sequence VQAGNPGGPGPGGRGRGRGQ. A compositionally biased stretch (gly residues) spans 345-360; that stretch reads NPGGPGPGGRGRGRGQ. In terms of domain architecture, KH 4 spans 371 to 438; that stretch reads LQEFNFIVPT…QQIDYARQLI (68 aa). Residue Thr427 is modified to Phosphothreonine. 2 disordered regions span residues 442–527 and 543–574; these read IGGP…GTDP and QAQP…PAGQ. Residues 463 to 500 show a composition bias toward pro residues; the sequence is PHGPPGPPGPGTPMGPYNPAPYNPGPPGPAPHGPPAPY. The span at 551–568 shows a compositional bias: low complexity; sequence PAGAPTTTQTNGQGDQQN. Ser625 bears the Phosphoserine mark.

In terms of assembly, found in a complex with PUF60 and far upstream element (FUSE) DNA segment. Interacts with PUF60 and JTV1. Post-translationally, ubiquitinated. This targets the protein for proteasome-mediated degradation.

Its subcellular location is the nucleus. Its function is as follows. Regulates MYC expression by binding to a single-stranded far-upstream element (FUSE) upstream of the MYC promoter. May act both as activator and repressor of transcription. The polypeptide is Far upstream element-binding protein 1 (Rattus norvegicus (Rat)).